Here is a 287-residue protein sequence, read N- to C-terminus: MATKPQDANTTSREAITSKADSPPRPTALIFDSGVGGLSVYQEIRQLLPNLHYIYAFDNVAFPYGEKSGEFIVERVLEIVTAVQQSHPLAIVVIACNTASTVSLPALRERFAFPVVGVVPAIKPAVRLTRNGVVGLLATRATVHASYTLDLIARFATDCKIELLGSSELVEAAETKLHGGVVPLEVLKKILHPWLSMREPPDTIVLGCTHFPLLTEELAQVLPEGTRMVDSGAAIARRTAWLISSQENVISSQDENIAYCMALDEDTDALLPVLQSYGFPKLQKLPI.

A compositionally biased stretch (polar residues) spans 1 to 15 (MATKPQDANTTSREA). The tract at residues 1-25 (MATKPQDANTTSREAITSKADSPPR) is disordered. Substrate-binding positions include 32–33 (DS) and 64–65 (YG). Cys96 serves as the catalytic Proton donor/acceptor. Substrate is bound at residue 97–98 (NT). The active-site Proton donor/acceptor is the Cys208. 209–210 (TH) contributes to the substrate binding site.

This sequence belongs to the aspartate/glutamate racemases family.

The enzyme catalyses L-glutamate = D-glutamate. It functions in the pathway cell wall biogenesis; peptidoglycan biosynthesis. Its function is as follows. Provides the (R)-glutamate required for cell wall biosynthesis. The chain is Glutamate racemase from Yersinia pseudotuberculosis serotype IB (strain PB1/+).